Consider the following 625-residue polypeptide: Coagulation factor XI (625 aa).

An N-terminal signal peptide occupies residues 1-18 (MTLLYQMVHFALFASVAG). Apple domains lie at 20–103 (CVTT…SKQC), 110–193 (CSKD…LKSC), 200–283 (CIRD…LQHC), and 291–374 (CHSS…LRLC). Intrachain disulfides connect cysteine 20-cysteine 103, cysteine 46-cysteine 76, cysteine 50-cysteine 56, cysteine 110-cysteine 193, cysteine 136-cysteine 165, cysteine 140-cysteine 146, cysteine 200-cysteine 283, cysteine 226-cysteine 255, cysteine 230-cysteine 236, cysteine 291-cysteine 374, cysteine 317-cysteine 346, cysteine 321-cysteine 327, cysteine 380-cysteine 500, cysteine 416-cysteine 432, cysteine 514-cysteine 581, cysteine 545-cysteine 560, and cysteine 571-cysteine 599. Residues asparagine 90 and asparagine 126 are each glycosylated (N-linked (GlcNAc...) asparagine). In terms of domain architecture, Peptidase S1 spans 388–623 (IVGGTQSVHG…YVDWILEKTQ (236 aa)). The active-site Charge relay system is histidine 431. Asparagine 450 is a glycosylation site (N-linked (GlcNAc...) asparagine). Aspartate 480 acts as the Charge relay system in catalysis. Residue asparagine 491 is glycosylated (N-linked (GlcNAc...) asparagine). 547–550 (AGYR) provides a ligand contact to heparin. Serine 575 acts as the Charge relay system in catalysis.

Belongs to the peptidase S1 family. Plasma kallikrein subfamily. As to quaternary structure, homodimer; disulfide-linked. After activation the heavy and light chains are also linked by a disulfide bond. Interacts (activated) with F9 (inactive and activated) in calcium-dependent manner. Forms a heterodimer with SERPINA5. Activated by factor XIIa (or XII), which cleaves each polypeptide after Arg-387 into the light chain, which contains the active site, and the heavy chain, which associates with high molecular weight (HMW) kininogen. Activated by F12 (activated); the presence of negatively charged surfaces accelerates activation. Activated by F2 (thrombin); the presence of negatively charged surfaces, such as polyphosphate and dextran sulfate, strongly accelerates activation. Autoactivated; the presence of negatively charged surfaces, such as polyphosphate and dextran sulfate, accelerates autoactivation and autolysis. In terms of processing, N-glycosylated on both chains. N-glycosylated sites mainly consist of nonfucosylated sialylated biantennary (in high abundance) and/or triantennary (in low abundance) complex structures.

The protein localises to the secreted. The enzyme catalyses Selective cleavage of Arg-|-Ala and Arg-|-Val bonds in factor IX to form factor IXa.. Inhibited by SERPINA5. Its function is as follows. Factor XI triggers the middle phase of the intrinsic pathway of blood coagulation by activating factor IX. The polypeptide is Coagulation factor XI (F11) (Bos taurus (Bovine)).